The primary structure comprises 191 residues: Cyclin-dependent kinase inhibitor 1 (191 aa).

Positions 62–81 are disordered; sequence LIHLEEEDKDGDTETSTYRR. The interval 162–191 is required for inhibitory function and interaction with CDK kinase complexes; that stretch reads QLKEKFKKKYNFDFEKEKPLEGRYEWVKLE.

Belongs to the CDI family. ICK/KRP subfamily. In terms of assembly, specifically interacts with CDKA-1, but not with CDKB1-1. Interacts with CYCD2-1 and CYCD3-1. In terms of processing, ubiquitinated independently by RKP and SCF (SKP1-CUL1-FBL5/SKP2B) protein ligase complex, leading to proteasomal degradation. Expressed at low levels in roots, stems, leaves and flowers.

Its subcellular location is the nucleus. It localises to the nucleoplasm. In terms of biological role, binds and inhibits CYCD2-1/CDKA-1 kinase complex activity. Regulates cell division which is crucial for plant growth, development and morphogenesis. Functions in turning cells from a mitotic to an endoreplicating cell cycle mode. Acts cell- and non-cell-autonomously to regulate endoreduplication by allowing S phase progression, but blocking entry into mitosis. Keeps on the one hand the plant cell cycle locally controlled, and on the other hand provides a possibility of linking cell cycle control in single cells with the supracellular organization of a tissue or an organ. May target specifically CDKA-1. This Arabidopsis thaliana (Mouse-ear cress) protein is Cyclin-dependent kinase inhibitor 1 (KRP1).